A 93-amino-acid polypeptide reads, in one-letter code: Alpha-conotoxin-like Ms20.1 (93 aa).

Positions 1-23 are cleaved as a signal peptide; that stretch reads MLKLEMMLVVLLILPLFYFDAGG. Positions 24–45 are excised as a propeptide; that stretch reads QVVQRDWRSDGLARYLQRGDRD. Glu-48 is modified (4-carboxyglutamate). At Pro-54 the chain carries 4-hydroxyproline. 4 cysteine pairs are disulfide-bonded: Cys-62–Cys-71, Cys-67–Cys-79, Cys-72–Cys-89, and Cys-77–Cys-91.

Belongs to the conotoxin D superfamily. As to quaternary structure, hetero-, homo- or pseudo-homodimer (identical sequence, different post-translational modifications). Heterodimer of [carboxyGlu-48, hydroxyPro-54]Ms20.1 and [carboxy'Glu-50', hydroxy'Pro-56']Ms20.4 may exist. Expressed by the venom duct.

The protein resides in the secreted. Its function is as follows. Alpha-conotoxins act on postsynaptic membranes, they bind to the nicotinic acetylcholine receptors (nAChR) and thus inhibit them. Through its two C-terminal domains, this homodimeric protein would bind to two nAChR allosteric sites, located outside the nAChR C-loop of the principal binding face and at the adjacent binding interface in a clockwise direction. This toxin specifically blocks mammalian neuronal nAChR of the alpha-7/CHRNA7, alpha-3-beta-2/CHRNA3-CHRNB2 and alpha-4-beta-2/CHRNA4-CHRNB2 subtypes. This is Alpha-conotoxin-like Ms20.1 from Conus mustelinus (Weasel cone).